The sequence spans 30 residues: Circulin A (30 aa).

Positions 1–30 (GIPCGESCVWIPCISAALGCSCKNKVCYRN) form a cross-link, cyclopeptide (Gly-Asn). Cystine bridges form between C4/C20, C8/C22, and C13/C27.

This is a cyclic peptide. As to expression, expressed in fruit, pedicel, root and stem but not in leaf (at protein level).

Functionally, probably participates in a plant defense mechanism. This chain is Circulin A, found in Chassalia chartacea (Chassalia curviflora).